Reading from the N-terminus, the 225-residue chain is Thymidylate kinase (225 aa).

Gly-10–Ser-17 provides a ligand contact to ATP.

The protein belongs to the thymidylate kinase family.

It carries out the reaction dTMP + ATP = dTDP + ADP. Phosphorylation of dTMP to form dTDP in both de novo and salvage pathways of dTTP synthesis. This is Thymidylate kinase from Polaromonas sp. (strain JS666 / ATCC BAA-500).